A 440-amino-acid polypeptide reads, in one-letter code: 23S rRNA (uracil(1939)-C(5))-methyltransferase RlmD (440 aa).

A TRAM domain is found at 11 to 69; that stretch reads STLDTKHQPVTIERLDHQGSGLAFLHKKPLFVDGALPGEEVLIQLTENKSKYARGQLIK. [4Fe-4S] cluster-binding residues include Cys82, Cys88, Cys91, and Cys169. Residues Gln272, Phe301, Asn306, Glu322, Asn349, and Asp370 each coordinate S-adenosyl-L-methionine. Cys396 serves as the catalytic Nucleophile.

It belongs to the class I-like SAM-binding methyltransferase superfamily. RNA M5U methyltransferase family. RlmD subfamily.

The enzyme catalyses uridine(1939) in 23S rRNA + S-adenosyl-L-methionine = 5-methyluridine(1939) in 23S rRNA + S-adenosyl-L-homocysteine + H(+). Functionally, catalyzes the formation of 5-methyl-uridine at position 1939 (m5U1939) in 23S rRNA. The protein is 23S rRNA (uracil(1939)-C(5))-methyltransferase RlmD of Vibrio cholerae serotype O1 (strain ATCC 39541 / Classical Ogawa 395 / O395).